The following is a 473-amino-acid chain: Trehalose-6-phosphate synthase (473 aa).

Position 10 (Arg-10) interacts with D-glucose 6-phosphate. Position 21–22 (21–22 (GG)) interacts with UDP-alpha-D-glucose. 2 residues coordinate D-glucose 6-phosphate: Tyr-76 and Asp-130. Residues Arg-262 and Lys-267 each coordinate UDP-alpha-D-glucose. Arg-300 provides a ligand contact to D-glucose 6-phosphate. Residues Phe-339 and 365–369 (LVAKE) contribute to the UDP-alpha-D-glucose site.

It belongs to the glycosyltransferase 20 family. As to quaternary structure, homotetramer.

It carries out the reaction D-glucose 6-phosphate + UDP-alpha-D-glucose = alpha,alpha-trehalose 6-phosphate + UDP + H(+). It participates in glycan biosynthesis; trehalose biosynthesis. Its function is as follows. Probably involved in the osmoprotection via the biosynthesis of trehalose. Catalyzes the transfer of glucose from UDP-alpha-D-glucose (UDP-Glc) to D-glucose 6-phosphate (Glc-6-P) to form trehalose-6-phosphate. Acts with retention of the anomeric configuration of the UDP-sugar donor. The sequence is that of Trehalose-6-phosphate synthase from Citrobacter koseri (strain ATCC BAA-895 / CDC 4225-83 / SGSC4696).